Here is a 548-residue protein sequence, read N- to C-terminus: 4-methyl-5-nitrocatechol 5-monooxygenase (548 aa).

It belongs to the PheA/TfdB FAD monooxygenase family. In terms of assembly, monomer. FAD is required as a cofactor.

The catalysed reaction is 4-methyl-5-nitrocatechol + NADPH + O2 = 2-hydroxy-5-methylquinone + nitrite + NADP(+) + H2O + H(+). The enzyme catalyses 4-methyl-5-nitrocatechol + NADH + O2 = 2-hydroxy-5-methylquinone + nitrite + NAD(+) + H2O + H(+). With respect to regulation, activated by magnesium or manganese ions. Inhibited by concentrations of 4-methyl-5-nitrocatechol (MNC) above 2 mM. Functionally, involved in the degradation of 2,4-dinitrotoluene (2,4-DNT). Catalyzes the removal of the nitro group from 4-methyl-5-nitrocatechol (MNC) to yield 2-hydroxy-5-methylquinone. It can use both NADH and NADPH as electron donors, but prefers NADPH. Also able to use 4-nitrocatechol as substrate. This chain is 4-methyl-5-nitrocatechol 5-monooxygenase, found in Burkholderia sp.